A 443-amino-acid polypeptide reads, in one-letter code: D-alanyl-D-alanine carboxypeptidase DacA (443 aa).

A signal peptide spans M1–A31. Residue S67 is the Acyl-ester intermediate of the active site. The active-site Proton acceptor is K70. S131 is a catalytic residue. Residue K258 participates in substrate binding.

This sequence belongs to the peptidase S11 family.

Its subcellular location is the secreted. It is found in the cell wall. The protein localises to the cell membrane. It localises to the membrane raft. The enzyme catalyses Preferential cleavage: (Ac)2-L-Lys-D-Ala-|-D-Ala. Also transpeptidation of peptidyl-alanyl moieties that are N-acyl substituents of D-alanine.. It functions in the pathway cell wall biogenesis; peptidoglycan biosynthesis. Removes C-terminal D-alanyl residues from sugar-peptide cell wall precursors. This is D-alanyl-D-alanine carboxypeptidase DacA (dacA) from Bacillus subtilis (strain 168).